The chain runs to 153 residues: Myoglobin (153 aa).

Residues 1 to 147 (MATACVKSLE…FSDECLDHLK (147 aa)) enclose the Globin domain. Histidine 94 provides a ligand contact to heme b.

It belongs to the globin family. As to quaternary structure, homodimer; disulfide-linked. Post-translationally, the N-terminus is blocked. Body wall globin is localized in cellular compartments belonging to the hypodermis, the dorsal, ventral and lateral cords, the nerve ring, and body wall muscle.

The protein localises to the cytoplasm. High oxygen affinity. Probably supplies oxygen needed for muscle activity. This is Myoglobin from Ascaris suum (Pig roundworm).